A 134-amino-acid polypeptide reads, in one-letter code: Small ribosomal subunit protein uS8 (134 aa).

This sequence belongs to the universal ribosomal protein uS8 family. Part of the 30S ribosomal subunit. Contacts proteins S5 and S12.

One of the primary rRNA binding proteins, it binds directly to 16S rRNA central domain where it helps coordinate assembly of the platform of the 30S subunit. This Thermotoga neapolitana (strain ATCC 49049 / DSM 4359 / NBRC 107923 / NS-E) protein is Small ribosomal subunit protein uS8.